Here is a 192-residue protein sequence, read N- to C-terminus: Inosine triphosphate pyrophosphatase (192 aa).

ITP is bound at residue 11–16 (TGNKNK). E41 is a binding site for Mg(2+). Residues K53, 69 to 70 (DT), K86, 146 to 149 (FGWD), K169, and 174 to 175 (HR) each bind ITP.

It belongs to the HAM1 NTPase family. Homodimer. The cofactor is Mg(2+). Mn(2+) is required as a cofactor.

Its subcellular location is the cytoplasm. It catalyses the reaction ITP + H2O = IMP + diphosphate + H(+). The enzyme catalyses dITP + H2O = dIMP + diphosphate + H(+). It carries out the reaction XTP + H2O = XMP + diphosphate + H(+). Functionally, pyrophosphatase that hydrolyzes non-canonical purine nucleotides such as inosine triphosphate (ITP), deoxyinosine triphosphate (dITP) or xanthosine 5'-triphosphate (XTP) to their respective monophosphate derivatives. The enzyme does not distinguish between the deoxy- and ribose forms. Probably excludes non-canonical purines from RNA and DNA precursor pools, thus preventing their incorporation into RNA and DNA and avoiding chromosomal lesions. The protein is Inosine triphosphate pyrophosphatase of Ciona intestinalis (Transparent sea squirt).